The following is a 433-amino-acid chain: Inositol hexakisphosphate kinase 1 (433 aa).

Residues 100 to 160 (ETVEQDDTPE…SPKVELHSHS (61 aa)) are disordered. A compositionally biased stretch (basic residues) spans 113–123 (PRRKHSRRSLH). Residues 139 to 149 (SFETSESSQET) show a composition bias toward polar residues. Residues 150-160 (KSPKVELHSHS) show a composition bias toward basic and acidic residues. Ser-151 carries the phosphoserine modification. Residue 220–228 (PCVLDLKMG) coordinates substrate. The interval 362 to 383 (PLCGPSTSPSNTSLEAGPSSPP) is disordered. Residues 366 to 375 (PSTSPSNTSL) show a composition bias toward polar residues.

This sequence belongs to the inositol phosphokinase (IPK) family.

The protein localises to the cytoplasm. Its subcellular location is the nucleus. It carries out the reaction 1D-myo-inositol hexakisphosphate + ATP = 5-diphospho-1D-myo-inositol 1,2,3,4,6-pentakisphosphate + ADP. It catalyses the reaction 1-diphospho-1D-myo-inositol 2,3,4,5,6-pentakisphosphate + ATP + H(+) = 1,5-bis(diphospho)-1D-myo-inositol 2,3,4,6-tetrakisphosphate + ADP. Converts inositol hexakisphosphate (InsP6) to diphosphoinositol pentakisphosphate (InsP7/PP-InsP5). Converts 1,3,4,5,6-pentakisphosphate (InsP5) to PP-InsP4. This Rattus norvegicus (Rat) protein is Inositol hexakisphosphate kinase 1 (Ip6k1).